Consider the following 666-residue polypeptide: Protein-arginine deiminase type-4 (666 aa).

Ca(2+) contacts are provided by N153, D155, D165, D168, D176, and D179. Citrulline is present on residues R212 and R218. A Ca(2+)-binding site is contributed by Q349. D350 is an active-site residue. The Ca(2+) site is built by E351, E353, D369, and S370. Citrulline is present on residues R372, R374, and R383. Residue R374 participates in substrate binding. Ca(2+) contacts are provided by F407, L410, and E411. Active-site residues include H471, D473, and C648.

It belongs to the protein arginine deiminase family. Requires Ca(2+) as cofactor. Post-translationally, autocitrullination at Arg-372 and Arg-374 inactivates the enzyme. In terms of tissue distribution, expressed in pluripotent embryonic stem and induced pluripotent stem cells but not multipotent neural stem cells.

The protein localises to the cytoplasm. The protein resides in the nucleus. It is found in the cytoplasmic granule. It catalyses the reaction L-arginyl-[protein] + H2O = L-citrullyl-[protein] + NH4(+). Its activity is regulated as follows. Strongly Inhibited by F-amidine and N-alpha-benzoyl-N5-(2-chloro-1-iminoethyl)-L-ornithine amide (Cl-amidine). These inhibitors are however not specific to PADI4 and also inhibit other members of the family. Its function is as follows. Catalyzes the citrullination/deimination of arginine residues of proteins such as histones, thereby playing a key role in histone code and regulation of stem cell maintenance. Citrullinates histone H1 at 'Arg-54' (to form H1R54ci), histone H3 at 'Arg-2', 'Arg-8', 'Arg-17' and/or 'Arg-26' (to form H3R2ci, H3R8ci, H3R17ci, H3R26ci, respectively) and histone H4 at 'Arg-3' (to form H4R3ci). Acts as a key regulator of stem cell maintenance by mediating citrullination of histone H1: citrullination of 'Arg-54' of histone H1 (H1R54ci) results in H1 displacement from chromatin and global chromatin decondensation, thereby promoting pluripotency and stem cell maintenance. Promotes profound chromatin decondensation during the innate immune response to infection in neutrophils by mediating formation of H1R54ci. Required for the formation of neutrophil extracellular traps (NETs); NETs are mainly composed of DNA fibers and are released by neutrophils to bind pathogens during inflammation. Citrullination of histone H3 prevents their methylation by CARM1 and HRMT1L2/PRMT1 and represses transcription. Citrullinates EP300/P300 at 'Arg-2142', which favors its interaction with NCOA2/GRIP1. This is Protein-arginine deiminase type-4 (Padi4) from Mus musculus (Mouse).